The primary structure comprises 329 residues: 4-hydroxythreonine-4-phosphate dehydrogenase (329 aa).

Substrate-binding residues include His-136 and Thr-137. Positions 166, 211, and 266 each coordinate a divalent metal cation. Substrate is bound by residues Lys-274, Asn-283, and Arg-292.

Belongs to the PdxA family. In terms of assembly, homodimer. Zn(2+) serves as cofactor. The cofactor is Mg(2+). It depends on Co(2+) as a cofactor.

It is found in the cytoplasm. The catalysed reaction is 4-(phosphooxy)-L-threonine + NAD(+) = 3-amino-2-oxopropyl phosphate + CO2 + NADH. Its pathway is cofactor biosynthesis; pyridoxine 5'-phosphate biosynthesis; pyridoxine 5'-phosphate from D-erythrose 4-phosphate: step 4/5. Its function is as follows. Catalyzes the NAD(P)-dependent oxidation of 4-(phosphooxy)-L-threonine (HTP) into 2-amino-3-oxo-4-(phosphooxy)butyric acid which spontaneously decarboxylates to form 3-amino-2-oxopropyl phosphate (AHAP). The sequence is that of 4-hydroxythreonine-4-phosphate dehydrogenase from Escherichia coli (strain K12 / MC4100 / BW2952).